Here is a 371-residue protein sequence, read N- to C-terminus: Vasopressin V2 receptor (371 aa).

A disordered region spans residues 1–27 (MILVSTTSAVPGALSSPSSPSNSSQEE). The Extracellular portion of the chain corresponds to 1–38 (MILVSTTSAVPGALSSPSSPSNSSQEELLDDRDPLLVR). Over residues 15-24 (SSPSSPSNSS) the composition is skewed to low complexity. The N-linked (GlcNAc...) asparagine glycan is linked to Asn-22. Residues 39–63 (AELALLSTIFVAVALSNGLVLGALI) form a helical membrane-spanning segment. Topologically, residues 64-77 (RRGRRGRWAPMHVF) are cytoplasmic. Residues 78–98 (ISHLCLADLAVALFQVLPQLA) traverse the membrane as a helical segment. Residues 99–113 (WDATDRFHGPDALCR) lie on the Extracellular side of the membrane. The chain crosses the membrane as a helical span at residues 114-135 (AVKYLQMVGMYASSYMILAMTL). Topologically, residues 136-159 (DRHRAICRPMLAYRHGGGARWNRP) are cytoplasmic. A helical membrane pass occupies residues 160–180 (VLVAWAFSLLLSLPQLFIFAQ). Residues 181–200 (RDVGNGSGVFDCWARFAEPW) lie on the Extracellular side of the membrane. Asn-185 carries N-linked (GlcNAc...) asparagine glycosylation. A helical membrane pass occupies residues 201-220 (GLRAYVTWIALMVFVAPALG). The Cytoplasmic segment spans residues 221–271 (IAACQVLIFREIHASLVPGPSERAGRRRRGHRTGSPSEGAHVSAAMAKTVR). The tract at residues 240 to 259 (PSERAGRRRRGHRTGSPSEG) is disordered. The helical transmembrane segment at 272–293 (MTLVIVIVYVLCWAPFFLVQLW) threads the bilayer. Topologically, residues 294–308 (AAWDPEAPLERPPFV) are extracellular. A helical transmembrane segment spans residues 309 to 328 (LLMLLASLNSCTNPWIYASF). Residues 329–371 (SSSVSSELRSLLCCAQRHTTHSLGPQDESCATASSSLMKDTPS) lie on the Cytoplasmic side of the membrane. Residues Cys-341 and Cys-342 are each lipidated (S-palmitoyl cysteine). The tract at residues 349–371 (HSLGPQDESCATASSSLMKDTPS) is disordered. Residues 357–371 (SCATASSSLMKDTPS) show a composition bias toward polar residues.

Belongs to the G-protein coupled receptor 1 family. Vasopressin/oxytocin receptor subfamily. As to quaternary structure, interacts with ARRDC4. Identified in a complex containing at least ARRDC4, V2R and HGS. Interacts with TMEM147. As to expression, highly expressed in kidney (at protein level) and moderately expressed in liver (at protein level). No or extremely low expression in left ventricule, muscle, bone and brain (at protein level).

The protein resides in the cell membrane. In terms of biological role, receptor for arginine vasopressin. The activity of this receptor is mediated by G proteins which activate adenylate cyclase. Involved in renal water reabsorption. The protein is Vasopressin V2 receptor (Avpr2) of Mus musculus (Mouse).